Here is a 453-residue protein sequence, read N- to C-terminus: MQVNETLAEGLRHEFQISIPAAEITAKADARLVDLKDKVKLDGFRPGKVPVSHLKKMYGRSVMIETIEDTIRDTNMQIATDRGFKLAGNPKVTMPSEVKEIEDILAGKSDLSYSVAIEVVPAIELADFKTFSLEKPVVDVSDADVDEAIKRIADQNRSYSARAEGAKAENGDRVTISFKGTIDGELFEAGSSDDVLVVLGSNALIPGFEEQLVGIGAGETRVVKTSFPSNYMENDLAGKDAEFETKASLIEAPQDIKIDDEFAKLLGLEELDQLKQVVREQLSAEFARAMRQHLKRALLDRLDDTHKFDAPPSLVEEEFEQVWKTVTTEMETNKKTFADENTTEEAARVEYRQIADRRVRLSLVLSDIGEKNGIKVTDDEINRAVISRARQTPGREKEIWSYYQKNPQALAQVRAPLFENKVVDFILELATVTEKKVTREDLFKDHEAHSTEA.

In terms of domain architecture, PPIase FKBP-type spans 171–256 (GDRVTISFKG…ASLIEAPQDI (86 aa)).

Belongs to the FKBP-type PPIase family. Tig subfamily.

Its subcellular location is the cytoplasm. It carries out the reaction [protein]-peptidylproline (omega=180) = [protein]-peptidylproline (omega=0). Its function is as follows. Involved in protein export. Acts as a chaperone by maintaining the newly synthesized protein in an open conformation. Functions as a peptidyl-prolyl cis-trans isomerase. In Nitrobacter hamburgensis (strain DSM 10229 / NCIMB 13809 / X14), this protein is Trigger factor.